Here is a 121-residue protein sequence, read N- to C-terminus: Small ribosomal subunit protein uS13 (121 aa).

The disordered stretch occupies residues 99 to 121; sequence RGQRTRTNSRTRKGPRRKIMKKK. Residues 101–121 are compositionally biased toward basic residues; that stretch reads QRTRTNSRTRKGPRRKIMKKK.

This sequence belongs to the universal ribosomal protein uS13 family. As to quaternary structure, part of the 30S ribosomal subunit. Forms a loose heterodimer with protein S19. Forms two bridges to the 50S subunit in the 70S ribosome.

Its function is as follows. Located at the top of the head of the 30S subunit, it contacts several helices of the 16S rRNA. In the 70S ribosome it contacts the 23S rRNA (bridge B1a) and protein L5 of the 50S subunit (bridge B1b), connecting the 2 subunits; these bridges are implicated in subunit movement. Contacts the tRNAs in the A and P-sites. The sequence is that of Small ribosomal subunit protein uS13 from Thermodesulfovibrio yellowstonii (strain ATCC 51303 / DSM 11347 / YP87).